The primary structure comprises 631 residues: MPRYGASLRQSCPRSGREQGQDGTAGAPGLLWMGLVLALALALALALALSDSRVLWAPAEAHPLSPQGHPARLHRIVPRLRDVFGWGNLTCPICKGLFTAINLGLKKEPNVARVGSVAIKLCNLLKIAPPAVCQSIVHLFEDDMVEVWRRSVLSPSEACGLLLGSTCGHWDIFSSWNISLPTVPKPPPKPPSPPAPGAPVSRILFLTDLHWDHDYLEGTDPDCADPLCCRRGSGLPPASRPGAGYWGEYSKCDLPLRTLESLLSGLGPAGPFDMVYWTGDIPAHDVWHQTRQDQLRALTTVTALVRKFLGPVPVYPAVGNHESTPVNSFPPPFIEGNHSSRWLYEAMAKAWEPWLPAEALRTLRIGGFYALSPYPGLRLISLNMNFCSRENFWLLINSTDPAGQLQWLVGELQAAEDRGDKVHIIGHIPPGHCLKSWSWNYYRIVARYENTLAAQFFGHTHVDEFEVFYDEETLSRPLAVAFLAPSATTYIGLNPGYRVYQIDGNYSGSSHVVLDHETYILNLTQANIPGAIPHWQLLYRARETYGLPNTLPTAWHNLVYRMRGDMQLFQTFWFLYHKGHPPSEPCGTPCRLATLCAQLSARADSPALCRHLMPDGSLPEAQSLWPRPLFC.

A disordered region spans residues Met-1–Gly-23. The first 46 residues, Met-1 to Ala-46, serve as a signal peptide directing secretion. Residues Gly-87–Asp-171 form the Saposin B-type domain. Residue Asn-88 is glycosylated (N-linked (GlcNAc...) asparagine). 3 disulfides stabilise this stretch: Cys-91–Cys-167, Cys-94–Cys-159, and Cys-122–Cys-133. N-linked (GlcNAc...) asparagine glycosylation occurs at Asn-177. 2 residues coordinate Zn(2+): Asp-208 and His-210. 2 disulfide bridges follow: Cys-223–Cys-228 and Cys-229–Cys-252. Zn(2+) contacts are provided by Asp-280 and Asn-320. Asn-337 and Asn-397 each carry an N-linked (GlcNAc...) asparagine glycan. The cysteines at positions 387 and 433 are disulfide-linked. Residues His-427, His-459, and His-461 each coordinate Zn(2+). Asn-505 is a glycosylation site (N-linked (GlcNAc...) asparagine). Ser-510 is subject to Phosphoserine; by PKC/PRKCD. Asn-522 carries an N-linked (GlcNAc...) asparagine glycan. 2 cysteine pairs are disulfide-bonded: Cys-586–Cys-590 and Cys-596–Cys-609.

This sequence belongs to the acid sphingomyelinase family. As to quaternary structure, monomer. Interacts with SORT1; the interaction is required for SMPD1 targeting to lysosomes. The cofactor is Zn(2+). Proteolytically processed. Mature lysosomal form arises from C-terminal proteolytic processing of pro-sphingomyelin phosphodiesterase. Post-translationally, this form is generated following cleavage by CASP7 in the extracellular milieu. It shows increased activity. In terms of processing, both lysosomal and secreted forms are glycosylated but they show a differential pattern of glycosylation. Phosphorylated at Ser-510 by PRKCD upon stress stimuli. Phosphorylation is required for secretion.

It localises to the lysosome. It is found in the lipid droplet. The protein resides in the secreted. Its subcellular location is the extracellular space. It catalyses the reaction a sphingomyelin + H2O = phosphocholine + an N-acylsphing-4-enine + H(+). The enzyme catalyses N-(octadecanoyl)-sphing-4-enine-1-phosphocholine + H2O = N-octadecanoylsphing-4-enine + phosphocholine + H(+). It carries out the reaction 1,2-dihexadecanoyl-sn-glycero-3-phosphocholine + H2O = 1,2-dihexadecanoyl-sn-glycerol + phosphocholine + H(+). The catalysed reaction is a 1,2-diacyl-sn-glycero-3-phosphocholine + H2O = phosphocholine + a 1,2-diacyl-sn-glycerol + H(+). Its activity is regulated as follows. Hydrolysis of liposomal sphingomyelin is stimulated by incorporation of diacylglycerol (DAG), ceramide and free fatty acids into the liposomal membranes. Phosphatidylcholine hydrolysis is inhibited by incorporation of cholesterol, ceramide, DAG, monoacylglycerol and fatty acids. Antidepressants, namely amitriptyline, imipramine, desipramine, fluoxetine, sertraline, escitalopram, and maprotiline inhibit sphingomyelin phosphodiesterase activity. With respect to regulation, (Microbial infection) The secretory form is activated by P.aeruginosa, this activation results in the release of ceramide in the outer leaflet of the plasma membrane. (Microbial infection) The secretory form is activated by human coronavirus SARS-CoV-2, this activation results in the release of ceramide in the outer leaflet of the plasma membrane. Converts sphingomyelin to ceramide. Exists as two enzymatic forms that arise from alternative trafficking of a single protein precursor, one that is targeted to the endolysosomal compartment, whereas the other is released extracellularly. However, in response to various forms of stress, lysosomal exocytosis may represent a major source of the secretory form. Functionally, in the lysosomes, converts sphingomyelin to ceramide. Plays an important role in the export of cholesterol from the intraendolysosomal membranes. Also has phospholipase C activities toward 1,2-diacylglycerolphosphocholine and 1,2-diacylglycerolphosphoglycerol. Modulates stress-induced apoptosis through the production of ceramide. In terms of biological role, when secreted, modulates cell signaling with its ability to reorganize the plasma membrane by converting sphingomyelin to ceramide. Secreted form is increased in response to stress and inflammatory mediators such as IL1B, IFNG or TNF as well as upon infection with bacteria and viruses. Produces the release of ceramide in the outer leaflet of the plasma membrane playing a central role in host defense. Ceramide reorganizes these rafts into larger signaling platforms that are required to internalize P.aeruginosa, induce apoptosis and regulate the cytokine response in infected cells. In wounded cells, the lysosomal form is released extracellularly in the presence of Ca(2+) and promotes endocytosis and plasma membrane repair. Its function is as follows. This form is generated following cleavage by CASP7 in the extracellular milieu in response to bacterial infection. It shows increased ability to convert sphingomyelin to ceramide and promotes plasma membrane repair. Plasma membrane repair by ceramide counteracts the action of gasdermin-D (GSDMD) perforin (PRF1) pores that are formed in response to bacterial infection. (Microbial infection) Secretion is activated by bacteria such as P.aeruginosa, N.gonorrhoeae and others, this activation results in the release of ceramide in the outer leaflet of the plasma membrane which facilitates the infection. Functionally, (Microbial infection) Secretion is activated by human coronaviruses SARS-CoV and SARS-CoV-2 as well as Zaire ebolavirus, this activation results in the release of ceramide in the outer leaflet of the plasma membrane which facilitates the infection. In terms of biological role, lacks residues that bind the cofactor Zn(2+) and has no enzyme activity. The protein is Sphingomyelin phosphodiesterase of Homo sapiens (Human).